A 940-amino-acid chain; its full sequence is SWI/SNF-related matrix-associated actin-dependent regulator of chromatin subfamily A-like protein 1 (940 aa).

Residues 1–155 form a disordered region; the sequence is MSISPLKCPC…GQGHPQASLE (155 aa). Residue Ser-2 is modified to N-acetylserine. Mediates interaction with RPA2 regions lie at residues 2–36 and 11–36; these read SISP…KLLA and LLQR…KLLA. Residues 17 to 40 show a composition bias toward basic and acidic residues; it reads GKIEANRQKALARRAEKLLAEQHQ. Positions 18–40 form a coiled coil; the sequence is KIEANRQKALARRAEKLLAEQHQ. Polar residues-rich tracts occupy residues 41 to 53 and 68 to 95; these read KPAQ…SQNL and KQQN…TSEQ. 4 positions are modified to phosphoserine: Ser-125, Ser-131, Ser-153, and Ser-200. HARP domains lie at 229 to 299 and 325 to 396; these read VVGS…QPLE and SLAF…DPLP. Residues 442–597 enclose the Helicase ATP-binding domain; that stretch reads NFAIAQRGRL…YTQILAVRPT (156 aa). 455–462 contributes to the ATP binding site; sequence DDMGLGKT. The short motif at 546–549 is the DESH box element; that stretch reads DESH. A Nuclear localization signal motif is present at residues 641–658; sequence RRLKGDVLSQLPAKQARW. The tract at residues 662–682 is disordered; it reads PQARSTPGPEPPWMPPPRMTT. Positions 669 to 679 are enriched in pro residues; it reads GPEPPWMPPPR. Positions 708–864 constitute a Helicase C-terminal domain; that stretch reads SIIEYILDLL…ETNFSEMTEA (157 aa). Residues 899-918 are disordered; that stretch reads ESFDPGSQDTGDKLDESTLT.

Belongs to the SNF2/RAD54 helicase family. SMARCAL1 subfamily. Interacts with RPA2; the interaction is direct and mediates the recruitment by the RPA complex of SMARCAL1 to sites of DNA damage. DNA damage-regulated phosphorylation by kinases that may include ATM, ATR and PRKDC. As to expression, expressed in mature oocytes, 2-4 cell stage embryos and 8-16 cell stage embryos. Expressed at lower levels in morulae and blastocysts.

The protein resides in the nucleus. It catalyses the reaction ATP + H2O = ADP + phosphate + H(+). ATP-dependent annealing helicase that binds selectively to fork DNA relative to ssDNA or dsDNA and catalyzes the rewinding of the stably unwound DNA. Rewinds single-stranded DNA bubbles that are stably bound by replication protein A (RPA). Acts throughout the genome to reanneal stably unwound DNA, performing the opposite reaction of many enzymes, such as helicases and polymerases, that unwind DNA. May play an important role in DNA damage response by acting at stalled replication forks. The chain is SWI/SNF-related matrix-associated actin-dependent regulator of chromatin subfamily A-like protein 1 (SMARCAL1) from Bos taurus (Bovine).